Consider the following 246-residue polypeptide: Octanoyltransferase (246 aa).

Residues 30–227 (GRIGNTLLLL…QFGRVFGHQV (198 aa)) enclose the BPL/LPL catalytic domain. Substrate is bound by residues 75–82 (RGGDVTYH), 155–157 (AIG), and 168–170 (GFA). The active-site Acyl-thioester intermediate is Cys-186.

This sequence belongs to the LipB family.

The protein localises to the cytoplasm. The catalysed reaction is octanoyl-[ACP] + L-lysyl-[protein] = N(6)-octanoyl-L-lysyl-[protein] + holo-[ACP] + H(+). It participates in protein modification; protein lipoylation via endogenous pathway; protein N(6)-(lipoyl)lysine from octanoyl-[acyl-carrier-protein]: step 1/2. Its function is as follows. Catalyzes the transfer of endogenously produced octanoic acid from octanoyl-acyl-carrier-protein onto the lipoyl domains of lipoate-dependent enzymes. Lipoyl-ACP can also act as a substrate although octanoyl-ACP is likely to be the physiological substrate. The sequence is that of Octanoyltransferase from Acidobacterium capsulatum (strain ATCC 51196 / DSM 11244 / BCRC 80197 / JCM 7670 / NBRC 15755 / NCIMB 13165 / 161).